A 177-amino-acid chain; its full sequence is Acetyltransferase (177 aa).

Positions 4 to 174 constitute an N-acetyltransferase domain; it reads AQLRRVTAES…PTAIYFKTLG (171 aa). Residues Glu-27, 96–98, 104–109, 130–131, and Tyr-141 contribute to the acetyl-CoA site; these read LMV, GRGLGR, and DT.

Functionally, renders tabtoxin-producing pathogens tolerant to their own phytotoxins. This Pseudomonas amygdali pv. tabaci (Pseudomonas syringae pv. tabaci) protein is Acetyltransferase (ttr).